The sequence spans 272 residues: Putative hydro-lyase RPD_1846 (272 aa).

Belongs to the D-glutamate cyclase family.

This is Putative hydro-lyase RPD_1846 from Rhodopseudomonas palustris (strain BisB5).